The chain runs to 626 residues: DNA mismatch repair protein MutL (626 aa).

Belongs to the DNA mismatch repair MutL/HexB family.

This protein is involved in the repair of mismatches in DNA. It is required for dam-dependent methyl-directed DNA mismatch repair. May act as a 'molecular matchmaker', a protein that promotes the formation of a stable complex between two or more DNA-binding proteins in an ATP-dependent manner without itself being part of a final effector complex. In Chlorobium luteolum (strain DSM 273 / BCRC 81028 / 2530) (Pelodictyon luteolum), this protein is DNA mismatch repair protein MutL.